The primary structure comprises 440 residues: Cell division protein FtsA (440 aa).

The protein belongs to the FtsA/MreB family. As to quaternary structure, self-interacts. Interacts with FtsZ.

The protein resides in the cell membrane. Functionally, cell division protein that is involved in the assembly of the Z ring. May serve as a membrane anchor for the Z ring. In Enterococcus faecalis (strain ATCC 700802 / V583), this protein is Cell division protein FtsA.